Consider the following 250-residue polypeptide: NADH-quinone oxidoreductase subunit C (250 aa).

It belongs to the complex I 30 kDa subunit family. NDH-1 is composed of 14 different subunits. Subunits NuoB, C, D, E, F, and G constitute the peripheral sector of the complex.

The protein resides in the cell inner membrane. The catalysed reaction is a quinone + NADH + 5 H(+)(in) = a quinol + NAD(+) + 4 H(+)(out). Its function is as follows. NDH-1 shuttles electrons from NADH, via FMN and iron-sulfur (Fe-S) centers, to quinones in the respiratory chain. The immediate electron acceptor for the enzyme in this species is believed to be ubiquinone. Couples the redox reaction to proton translocation (for every two electrons transferred, four hydrogen ions are translocated across the cytoplasmic membrane), and thus conserves the redox energy in a proton gradient. This chain is NADH-quinone oxidoreductase subunit C, found in Xanthomonas campestris pv. campestris (strain 8004).